Reading from the N-terminus, the 1138-residue chain is uncharacterized protein (1138 aa).

Positions Met1–Ala28 are cleaved as a signal peptide. The next 7 membrane-spanning stretches (helical) occupy residues Ile331–Gly351, Tyr359–Thr379, Met392–Met412, Met494–Val514, Cys520–Phe540, Met554–Val574, and Ile699–Phe719. Over residues Asp775–Val784 the composition is skewed to gly residues. 3 disordered regions span residues Asp775–Gly914, Gly958–Ala977, and Glu995–Arg1071. Positions Ala801–Ser830 are enriched in low complexity. Positions Thr838–Ala852 are enriched in pro residues. A compositionally biased stretch (polar residues) spans Ile854–Thr869. 4 stretches are compositionally biased toward basic and acidic residues: residues Ile875 to Asp888, Arg961 to Ala977, Glu995 to Asn1032, and Leu1058 to Arg1071.

This sequence belongs to the TrbL/VirB6 family.

It localises to the cell membrane. This is an uncharacterized protein from Rickettsia felis (strain ATCC VR-1525 / URRWXCal2) (Rickettsia azadi).